Reading from the N-terminus, the 454-residue chain is Bifunctional protein GlmU (454 aa).

Residues 1–228 form a pyrophosphorylase region; that stretch reads MSLKVIILAA…EMEVLGVNNK (228 aa). Residues 8 to 11, Lys-22, Gln-73, 78 to 79, 100 to 102, Gly-138, Glu-153, Asn-168, and Asn-226 contribute to the UDP-N-acetyl-alpha-D-glucosamine site; these read LAAG, GT, and YGD. A Mg(2+)-binding site is contributed by Asp-102. A Mg(2+)-binding site is contributed by Asn-226. The tract at residues 229–249 is linker; it reads SQLQSLERQYQAQLAEELMEQ. Residues 250 to 454 form an N-acetyltransferase region; the sequence is GVTVLDASRI…IKGWQKPTKN (205 aa). UDP-N-acetyl-alpha-D-glucosamine contacts are provided by Arg-332 and Lys-350. The Proton acceptor role is filled by His-362. Tyr-365 and Asn-376 together coordinate UDP-N-acetyl-alpha-D-glucosamine. Residues Ala-379, 385–386, Ser-404, Ala-422, and Arg-439 contribute to the acetyl-CoA site; that span reads NY.

This sequence in the N-terminal section; belongs to the N-acetylglucosamine-1-phosphate uridyltransferase family. In the C-terminal section; belongs to the transferase hexapeptide repeat family. As to quaternary structure, homotrimer. It depends on Mg(2+) as a cofactor.

The protein resides in the cytoplasm. It catalyses the reaction alpha-D-glucosamine 1-phosphate + acetyl-CoA = N-acetyl-alpha-D-glucosamine 1-phosphate + CoA + H(+). It carries out the reaction N-acetyl-alpha-D-glucosamine 1-phosphate + UTP + H(+) = UDP-N-acetyl-alpha-D-glucosamine + diphosphate. It participates in nucleotide-sugar biosynthesis; UDP-N-acetyl-alpha-D-glucosamine biosynthesis; N-acetyl-alpha-D-glucosamine 1-phosphate from alpha-D-glucosamine 6-phosphate (route II): step 2/2. Its pathway is nucleotide-sugar biosynthesis; UDP-N-acetyl-alpha-D-glucosamine biosynthesis; UDP-N-acetyl-alpha-D-glucosamine from N-acetyl-alpha-D-glucosamine 1-phosphate: step 1/1. The protein operates within bacterial outer membrane biogenesis; LPS lipid A biosynthesis. In terms of biological role, catalyzes the last two sequential reactions in the de novo biosynthetic pathway for UDP-N-acetylglucosamine (UDP-GlcNAc). The C-terminal domain catalyzes the transfer of acetyl group from acetyl coenzyme A to glucosamine-1-phosphate (GlcN-1-P) to produce N-acetylglucosamine-1-phosphate (GlcNAc-1-P), which is converted into UDP-GlcNAc by the transfer of uridine 5-monophosphate (from uridine 5-triphosphate), a reaction catalyzed by the N-terminal domain. The sequence is that of Bifunctional protein GlmU from Hydrogenovibrio crunogenus (strain DSM 25203 / XCL-2) (Thiomicrospira crunogena).